The primary structure comprises 465 residues: Hydroxyacid-oxoacid transhydrogenase, mitochondrial (465 aa).

The protein belongs to the iron-containing alcohol dehydrogenase family. Hydroxyacid-oxoacid transhydrogenase subfamily.

Its subcellular location is the mitochondrion. It catalyses the reaction (S)-3-hydroxybutanoate + 2-oxoglutarate = (R)-2-hydroxyglutarate + acetoacetate. It carries out the reaction 4-hydroxybutanoate + 2-oxoglutarate = (R)-2-hydroxyglutarate + succinate semialdehyde. Its function is as follows. Catalyzes the cofactor-independent reversible oxidation of gamma-hydroxybutyrate (GHB) to succinic semialdehyde (SSA) coupled to reduction of 2-ketoglutarate (2-KG) to D-2-hydroxyglutarate (D-2-HG). L-3-hydroxybutyrate (L-3-OHB) is also a substrate for HOT when using 2-KG as hydrogen acceptor, resulting in the formation of D-2-HG. This chain is Hydroxyacid-oxoacid transhydrogenase, mitochondrial, found in Caenorhabditis elegans.